The primary structure comprises 710 residues: Polyribonucleotide nucleotidyltransferase (710 aa).

Asp489 and Asp495 together coordinate Mg(2+). The region spanning 556 to 615 is the KH domain; sequence PKIDTIKIDVDKIKVVIGKGGETIDKIIAETGVKIDIDDEGNVSIYSSDQAAIDRTKEII. Residues 625-693 enclose the S1 motif domain; that stretch reads GEVYHAKVIR…EKGRVDASMK (69 aa). The disordered stretch occupies residues 691–710; sequence SMKALIPRPPKPEKKEEKHD. The span at 700 to 710 shows a compositional bias: basic and acidic residues; it reads PKPEKKEEKHD.

The protein belongs to the polyribonucleotide nucleotidyltransferase family. It depends on Mg(2+) as a cofactor.

It is found in the cytoplasm. It catalyses the reaction RNA(n+1) + phosphate = RNA(n) + a ribonucleoside 5'-diphosphate. Functionally, involved in mRNA degradation. Catalyzes the phosphorolysis of single-stranded polyribonucleotides processively in the 3'- to 5'-direction. This Streptococcus pyogenes serotype M4 (strain MGAS10750) protein is Polyribonucleotide nucleotidyltransferase.